We begin with the raw amino-acid sequence, 141 residues long: Large ribosomal subunit protein bL17 (141 aa).

It belongs to the bacterial ribosomal protein bL17 family. Part of the 50S ribosomal subunit. Contacts protein L32.

The sequence is that of Large ribosomal subunit protein bL17 from Rhizobium meliloti (strain 1021) (Ensifer meliloti).